We begin with the raw amino-acid sequence, 154 residues long: Protein X (154 aa).

The mitochondrial targeting sequence stretch occupies residues 68–117 (PCALRFTSARRMETTVNAHQVLPKVLHKRTLGLSAMSTTDLEAYFKDCLF).

It belongs to the orthohepadnavirus protein X family. As to quaternary structure, may form homodimer. May interact with host CEBPA, CFLAR, CREB1, DDB1, E4F1, HBXIP, HSPD1/HSP60, NFKBIA, POLR2E and SMAD4. Interacts with host SMC5-SMC6 complex and induces its degradation. Interacts with host TRPC4AP; leading to prevent ubiquitination of TRPC4AP. Interacts with host PLSCR1; this interaction promotes ubiquitination and degradation of HBx and impairs HBx-mediated cell proliferation. A fraction may be phosphorylated in insect cells and HepG2 cells, a human hepatoblastoma cell line. Phosphorylated in vitro by host protein kinase C or mitogen-activated protein kinase. N-acetylated in insect cells.

It is found in the host cytoplasm. The protein resides in the host nucleus. It localises to the host mitochondrion. Functionally, multifunctional protein that plays a role in silencing host antiviral defenses and promoting viral transcription. Does not seem to be essential for HBV infection. May be directly involved in development of cirrhosis and liver cancer (hepatocellular carcinoma). Most of cytosolic activities involve modulation of cytosolic calcium. The effect on apoptosis is controversial depending on the cell types in which the studies have been conducted. May induce apoptosis by localizing in mitochondria and causing loss of mitochondrial membrane potential. May also modulate apoptosis by binding host CFLAR, a key regulator of the death-inducing signaling complex (DISC). Promotes viral transcription by using the host E3 ubiquitin ligase DDB1 to target the SMC5-SMC6 complex to proteasomal degradation. This host complex would otherwise bind to viral episomal DNA, and prevents its transcription. Moderately stimulates transcription of many different viral and cellular transcription elements. Promoters and enhancers stimulated by HBx contain DNA binding sites for NF-kappa-B, AP-1, AP-2, c-EBP, ATF/CREB, or the calcium-activated factor NF-AT. The sequence is that of Protein X from Hepatitis B virus genotype C subtype adr (isolate Japan/Nishioka/1983) (HBV-C).